A 428-amino-acid polypeptide reads, in one-letter code: Serine--tRNA ligase (428 aa).

235–237 contributes to the L-serine binding site; the sequence is TAE. 266-268 provides a ligand contact to ATP; sequence RSE. An L-serine-binding site is contributed by Glu-289. 353–356 serves as a coordination point for ATP; sequence EISS. Ser-389 lines the L-serine pocket.

This sequence belongs to the class-II aminoacyl-tRNA synthetase family. Type-1 seryl-tRNA synthetase subfamily. As to quaternary structure, homodimer. The tRNA molecule binds across the dimer.

The protein resides in the cytoplasm. It carries out the reaction tRNA(Ser) + L-serine + ATP = L-seryl-tRNA(Ser) + AMP + diphosphate + H(+). It catalyses the reaction tRNA(Sec) + L-serine + ATP = L-seryl-tRNA(Sec) + AMP + diphosphate + H(+). Its pathway is aminoacyl-tRNA biosynthesis; selenocysteinyl-tRNA(Sec) biosynthesis; L-seryl-tRNA(Sec) from L-serine and tRNA(Sec): step 1/1. Its function is as follows. Catalyzes the attachment of serine to tRNA(Ser). Is also able to aminoacylate tRNA(Sec) with serine, to form the misacylated tRNA L-seryl-tRNA(Sec), which will be further converted into selenocysteinyl-tRNA(Sec). The chain is Serine--tRNA ligase from Shewanella sp. (strain W3-18-1).